The chain runs to 360 residues: Alanine racemase (360 aa).

Lys34 serves as the catalytic Proton acceptor; specific for D-alanine. Lys34 is modified (N6-(pyridoxal phosphate)lysine). Arg129 serves as a coordination point for substrate. Tyr254 functions as the Proton acceptor; specific for L-alanine in the catalytic mechanism. Met302 is a substrate binding site.

It belongs to the alanine racemase family. The cofactor is pyridoxal 5'-phosphate.

It carries out the reaction L-alanine = D-alanine. The protein operates within amino-acid biosynthesis; D-alanine biosynthesis; D-alanine from L-alanine: step 1/1. Its function is as follows. Catalyzes the interconversion of L-alanine and D-alanine. May also act on other amino acids. The polypeptide is Alanine racemase (alr) (Pectobacterium carotovorum subsp. carotovorum (strain PC1)).